The following is a 137-amino-acid chain: uncharacterized protein (137 aa).

Positions 1–26 (MKDKMWCEDTAQPHRRLPAPPSSSSP) are disordered.

This is an uncharacterized protein from Homo sapiens (Human).